Reading from the N-terminus, the 222-residue chain is Interleukin-12 subunit alpha (222 aa).

The N-terminal stretch at 1 to 25 (MCPPRGLLLVAILVLLNHLDHLSLA) is a signal peptide. 3 disulfide bridges follow: Cys-40–Cys-113, Cys-67–Cys-199, and Cys-88–Cys-126. N-linked (GlcNAc...) asparagine glycosylation is found at Asn-42, Asn-96, and Asn-110.

Belongs to the IL-6 superfamily. As to quaternary structure, heterodimer with IL12B; disulfide-linked. This heterodimer is known as interleukin IL-12. Heterodimer with EBI3/IL27B; not disulfide-linked. This heterodimer is known as interleukin IL-35. Interacts with NBR1; this interaction promotes IL-12 secretion.

The protein localises to the secreted. Its function is as follows. Heterodimerizes with IL12B to form the IL-12 cytokine or with EBI3/IL27B to form the IL-35 cytokine. IL-12 is primarily produced by professional antigen-presenting cells (APCs) such as B-cells and dendritic cells (DCs) as well as macrophages and granulocytes and regulates T-cell and natural killer-cell responses, induces the production of interferon-gamma (IFN-gamma), favors the differentiation of T-helper 1 (Th1) cells and is an important link between innate resistance and adaptive immunity. Mechanistically, exerts its biological effects through a receptor composed of IL12R1 and IL12R2 subunits. Binding to the receptor results in the rapid tyrosine phosphorylation of a number of cellular substrates including the JAK family kinases TYK2 and JAK2. In turn, recruited STAT4 gets phosphorylated and translocates to the nucleus where it regulates cytokine/growth factor responsive genes. As part of IL-35, plays essential roles in maintaining the immune homeostasis of the liver microenvironment and also functions as an immune-suppressive cytokine. Mediates biological events through unconventional receptors composed of IL12RB2 and gp130/IL6ST heterodimers or homodimers. Signaling requires the transcription factors STAT1 and STAT4, which form a unique heterodimer that binds to distinct DNA sites. The protein is Interleukin-12 subunit alpha (IL12A) of Equus caballus (Horse).